A 128-amino-acid chain; its full sequence is Ribosome-binding factor A (128 aa).

The protein belongs to the RbfA family. In terms of assembly, monomer. Binds 30S ribosomal subunits, but not 50S ribosomal subunits or 70S ribosomes.

Its subcellular location is the cytoplasm. Its function is as follows. One of several proteins that assist in the late maturation steps of the functional core of the 30S ribosomal subunit. Associates with free 30S ribosomal subunits (but not with 30S subunits that are part of 70S ribosomes or polysomes). Required for efficient processing of 16S rRNA. May interact with the 5'-terminal helix region of 16S rRNA. The chain is Ribosome-binding factor A from Haemophilus influenzae (strain 86-028NP).